Reading from the N-terminus, the 315-residue chain is Transaldolase (315 aa).

K131 functions as the Schiff-base intermediate with substrate in the catalytic mechanism.

It belongs to the transaldolase family. Type 1 subfamily. As to quaternary structure, homodimer.

The protein resides in the cytoplasm. It catalyses the reaction D-sedoheptulose 7-phosphate + D-glyceraldehyde 3-phosphate = D-erythrose 4-phosphate + beta-D-fructose 6-phosphate. The protein operates within carbohydrate degradation; pentose phosphate pathway; D-glyceraldehyde 3-phosphate and beta-D-fructose 6-phosphate from D-ribose 5-phosphate and D-xylulose 5-phosphate (non-oxidative stage): step 2/3. Its function is as follows. Transaldolase is important for the balance of metabolites in the pentose-phosphate pathway. The sequence is that of Transaldolase from Actinobacillus pleuropneumoniae serotype 3 (strain JL03).